We begin with the raw amino-acid sequence, 209 residues long: 3-hexulose-6-phosphate synthase (209 aa).

This sequence belongs to the HPS/KGPDC family. HPS subfamily. As to quaternary structure, homodimer.

It carries out the reaction D-ribulose 5-phosphate + formaldehyde = D-arabino-hex-3-ulose 6-phosphate. It participates in one-carbon metabolism; formaldehyde assimilation via RuMP pathway; D-fructose 6-phosphate from D-ribulose 5-phosphate and formaldehyde: step 1/2. Its function is as follows. Catalyzes the condensation of ribulose 5-phosphate with formaldehyde to form 3-hexulose 6-phosphate. The polypeptide is 3-hexulose-6-phosphate synthase (rmpA) (Methylomonas aminofaciens).